The sequence spans 362 residues: Cobalt-precorrin-5B C(1)-methyltransferase (362 aa).

It belongs to the CbiD family.

The catalysed reaction is Co-precorrin-5B + S-adenosyl-L-methionine = Co-precorrin-6A + S-adenosyl-L-homocysteine. The protein operates within cofactor biosynthesis; adenosylcobalamin biosynthesis; cob(II)yrinate a,c-diamide from sirohydrochlorin (anaerobic route): step 6/10. Catalyzes the methylation of C-1 in cobalt-precorrin-5B to form cobalt-precorrin-6A. The polypeptide is Cobalt-precorrin-5B C(1)-methyltransferase (Burkholderia vietnamiensis (strain G4 / LMG 22486) (Burkholderia cepacia (strain R1808))).